The primary structure comprises 108 residues: Mitochondrial pyruvate carrier 4 (108 aa).

The next 3 helical transmembrane spans lie at 19–35 (IHFW…IANI), 51–67 (IAVT…SMVI), and 74–90 (LFSV…YQLA).

This sequence belongs to the mitochondrial pyruvate carrier (MPC) (TC 2.A.105) family.

The protein localises to the mitochondrion inner membrane. Mediates the uptake of pyruvate into mitochondria. In Arabidopsis thaliana (Mouse-ear cress), this protein is Mitochondrial pyruvate carrier 4.